Here is a 297-residue protein sequence, read N- to C-terminus: Pyridoxal 5'-phosphate synthase subunit PdxS (297 aa).

D27 lines the D-ribose 5-phosphate pocket. K84 functions as the Schiff-base intermediate with D-ribose 5-phosphate in the catalytic mechanism. G156 contributes to the D-ribose 5-phosphate binding site. R168 contributes to the D-glyceraldehyde 3-phosphate binding site. D-ribose 5-phosphate contacts are provided by residues G217 and G238–S239.

The protein belongs to the PdxS/SNZ family. In the presence of PdxT, forms a dodecamer of heterodimers.

The catalysed reaction is aldehydo-D-ribose 5-phosphate + D-glyceraldehyde 3-phosphate + L-glutamine = pyridoxal 5'-phosphate + L-glutamate + phosphate + 3 H2O + H(+). The protein operates within cofactor biosynthesis; pyridoxal 5'-phosphate biosynthesis. Its function is as follows. Catalyzes the formation of pyridoxal 5'-phosphate from ribose 5-phosphate (RBP), glyceraldehyde 3-phosphate (G3P) and ammonia. The ammonia is provided by the PdxT subunit. Can also use ribulose 5-phosphate and dihydroxyacetone phosphate as substrates, resulting from enzyme-catalyzed isomerization of RBP and G3P, respectively. The protein is Pyridoxal 5'-phosphate synthase subunit PdxS of Corynebacterium diphtheriae (strain ATCC 700971 / NCTC 13129 / Biotype gravis).